Consider the following 77-residue polypeptide: MAVFDEVKDVVVEQLSVAPDAVKMESKIIEDLGADSLDVVELVMALEEKFEVEIPDSEAEKLISISDVVNYIDGLKK.

In terms of domain architecture, Carrier spans 1-76; that stretch reads MAVFDEVKDV…DVVNYIDGLK (76 aa). Serine 36 bears the O-(pantetheine 4'-phosphoryl)serine mark.

The protein belongs to the acyl carrier protein (ACP) family. Post-translationally, 4'-phosphopantetheine is transferred from CoA to a specific serine of apo-ACP by AcpS. This modification is essential for activity because fatty acids are bound in thioester linkage to the sulfhydryl of the prosthetic group.

The protein resides in the cytoplasm. It participates in lipid metabolism; fatty acid biosynthesis. Carrier of the growing fatty acid chain in fatty acid biosynthesis. This is Acyl carrier protein from Campylobacter fetus subsp. fetus (strain 82-40).